A 329-amino-acid chain; its full sequence is MTVTIYDVAREARVSMATVSRVVNGNQNVKPETRNKVNEVIKRLNYRPNAVARGLASKRTTTVGVIIPDISNVYYSQLARGLEDIATMYKYHSIISNSDNDPEKEKEIFNNLLSKQVDGIIFLGGTISEEIKSLINQSSVPVVVSGTDGKDDHIASVNIDFKQAAEEATQYLIEKGAKTFSLIGGEYSIKAQDDVLEGLKNVLSQHQLKLDDTLHLTGNESYKSGIKTFEQLQSNLPDAVLCISDEQAIGILHSAQDAGVKVPEDLQIISFNNTRLVEMVRPQLSSVIQPLYDIGAVGMRLLTKYMNDEEIENPNVILPHRIEYRGTTQ.

The 57-residue stretch at Met-1–Ser-57 folds into the HTH lacI-type domain. Residues Ile-5–Asn-24 constitute a DNA-binding region (H-T-H motif).

In terms of biological role, global transcriptional regulator of carbon catabolite repression (CCR) and carbon catabolite activation (CCA), which ensures optimal energy usage under diverse conditions. This is Catabolite control protein A (ccpA) from Staphylococcus epidermidis (strain ATCC 12228 / FDA PCI 1200).